We begin with the raw amino-acid sequence, 318 residues long: 1-aminocyclopropane-1-carboxylate oxidase (318 aa).

The Fe2OG dioxygenase domain occupies 151-251 (PTFGTKVSNY…RMSIASFYNP (101 aa)). Fe cation contacts are provided by histidine 175, aspartate 177, and histidine 232.

This sequence belongs to the iron/ascorbate-dependent oxidoreductase family. Fe cation serves as cofactor.

The catalysed reaction is 1-aminocyclopropane-1-carboxylate + L-ascorbate + O2 = ethene + L-dehydroascorbate + hydrogen cyanide + CO2 + 2 H2O. It participates in alkene biosynthesis; ethylene biosynthesis via S-adenosyl-L-methionine; ethylene from S-adenosyl-L-methionine: step 2/2. The sequence is that of 1-aminocyclopropane-1-carboxylate oxidase (ACO) from Dendrobium crumenatum (Tropical pigeon orchid).